The following is a 337-amino-acid chain: MIQKNWQELIKPNKVEFCTHDNPNISSVIVEPLERGFGLTLGNALRRVLLSSLRGAAITAVQIDGVLHEFSSIPGVREDVTDIILNIKEIALRMQEEGPKRVVVCKEGPGVVRAGDINTVGDMEILNPEHVICTLDEGAEIRMEFIVNTGKGYIPSDRNCVDDGRIGLIPVDSLYSPIRKVSYKVENTREGQVLDYDKLTLTIETNGAVNGEDAVAFAARILQDQLSLFVNFEEPQKEIVDESDSELTFNPALLKKVDELELSVRSANCLKNDNIVYIGDLIQKTESEMLRTPNFGRKSLNEIKEVLACMGLHLGMEIPTWPPENIDDLAKRYEDQY.

The segment at 1–233 is alpha N-terminal domain (alpha-NTD); that stretch reads MIQKNWQELI…DQLSLFVNFE (233 aa). The segment at 249–337 is alpha C-terminal domain (alpha-CTD); the sequence is FNPALLKKVD…DLAKRYEDQY (89 aa).

Belongs to the RNA polymerase alpha chain family. In terms of assembly, homodimer. The RNAP catalytic core consists of 2 alpha, 1 beta, 1 beta' and 1 omega subunit. When a sigma factor is associated with the core the holoenzyme is formed, which can initiate transcription.

It catalyses the reaction RNA(n) + a ribonucleoside 5'-triphosphate = RNA(n+1) + diphosphate. Its function is as follows. DNA-dependent RNA polymerase catalyzes the transcription of DNA into RNA using the four ribonucleoside triphosphates as substrates. The chain is DNA-directed RNA polymerase subunit alpha from Bartonella quintana (strain Toulouse) (Rochalimaea quintana).